The primary structure comprises 199 residues: Achaete-scute homolog 1 (199 aa).

Positions 37 to 56 are disordered; the sequence is PAEEQQASKAKPIKRQRSAS. Residues 81-133 form the bHLH domain; that stretch reads AAVARRNERERNRVKLVNLGFATLREHVPNGAANKKMSKVETLRSAVEYIRAL. Polar residues predominate over residues 162–179; the sequence is HDMNSMAGSPVSSYSSDE. The disordered stretch occupies residues 162-189; that stretch reads HDMNSMAGSPVSSYSSDEGSYDPLSPEE.

Efficient DNA binding requires dimerization with another bHLH protein. Neuronal precursor cells.

The protein resides in the nucleus. Functionally, transcription factor that plays a key role in neuronal differentiation: acts as a pioneer transcription factor, accessing closed chromatin to allow other factors to bind and activate neural pathways. Directly binds the E box motif (5'-CANNTG-3') on promoters and promotes transcription of neuronal genes. The combination of three transcription factors, ASCL1, POU3F2/BRN2 and MYT1L, is sufficient to reprogram fibroblasts and other somatic cells into induced neuronal (iN) cells in vitro. This Xenopus laevis (African clawed frog) protein is Achaete-scute homolog 1 (ascl1).